We begin with the raw amino-acid sequence, 158 residues long: NADH-quinone oxidoreductase subunit B (158 aa).

Residues cysteine 37, cysteine 38, cysteine 102, and cysteine 132 each coordinate [4Fe-4S] cluster.

It belongs to the complex I 20 kDa subunit family. NDH-1 is composed of 14 different subunits. Subunits NuoB, C, D, E, F, and G constitute the peripheral sector of the complex. [4Fe-4S] cluster is required as a cofactor.

It is found in the cell inner membrane. It carries out the reaction a quinone + NADH + 5 H(+)(in) = a quinol + NAD(+) + 4 H(+)(out). Functionally, NDH-1 shuttles electrons from NADH, via FMN and iron-sulfur (Fe-S) centers, to quinones in the respiratory chain. Couples the redox reaction to proton translocation (for every two electrons transferred, four hydrogen ions are translocated across the cytoplasmic membrane), and thus conserves the redox energy in a proton gradient. The protein is NADH-quinone oxidoreductase subunit B of Hydrogenovibrio crunogenus (strain DSM 25203 / XCL-2) (Thiomicrospira crunogena).